A 1442-amino-acid polypeptide reads, in one-letter code: DNA polymerase III PolC-type (1442 aa).

The Exonuclease domain occupies 409 to 568; that stretch reads YVIFDIETTG…YDAIVLADVF (160 aa).

It belongs to the DNA polymerase type-C family. PolC subfamily.

Its subcellular location is the cytoplasm. The enzyme catalyses DNA(n) + a 2'-deoxyribonucleoside 5'-triphosphate = DNA(n+1) + diphosphate. Functionally, required for replicative DNA synthesis. This DNA polymerase also exhibits 3' to 5' exonuclease activity. This Ureaplasma parvum serovar 3 (strain ATCC 700970) protein is DNA polymerase III PolC-type.